Here is an 88-residue protein sequence, read N- to C-terminus: Protein K3 (88 aa).

The 75-residue stretch at Leu8 to Lys82 folds into the S1 motif domain. Binding to host EIF2AK2/PKR regions lie at residues Ser43–Glu53 and Lys74–Val79.

It belongs to the orthopoxvirus OPG041 family. As to quaternary structure, interacts with host EIF2AK2/PKR kinase.

Functionally, viral mimic of eIF-2-alpha that acts as a pseudosubstrate for EIF2AK2/PKR kinase. Inhibits therefore eIF-2-alpha phosphorylation by host EIF2AK2/PKR kinase and prevents protein synthesis shutoff. Determinant of host species specificity. The polypeptide is Protein K3 (OPG041) (Homo sapiens (Human)).